A 178-amino-acid polypeptide reads, in one-letter code: Large ribosomal subunit protein eL20 (178 aa).

This sequence belongs to the eukaryotic ribosomal protein eL20 family.

In Castanea sativa (Sweet chestnut), this protein is Large ribosomal subunit protein eL20 (RPL18A).